Consider the following 142-residue polypeptide: Large ribosomal subunit protein uL13 (142 aa).

This sequence belongs to the universal ribosomal protein uL13 family. Part of the 50S ribosomal subunit.

Its function is as follows. This protein is one of the early assembly proteins of the 50S ribosomal subunit, although it is not seen to bind rRNA by itself. It is important during the early stages of 50S assembly. The protein is Large ribosomal subunit protein uL13 of Acholeplasma laidlawii (strain PG-8A).